The following is a 428-amino-acid chain: UPF0229 protein YeaH (428 aa).

Residues 78–90 are compositionally biased toward basic and acidic residues; sequence GNDHFIQNDRIER. A disordered region spans residues 78-111; it reads GNDHFIQNDRIERPQGGGGGGSGSGQGQASQDGE. Residues 92 to 103 are compositionally biased toward gly residues; it reads QGGGGGGSGSGQ.

The protein belongs to the UPF0229 family.

This Salmonella heidelberg (strain SL476) protein is UPF0229 protein YeaH.